The chain runs to 159 residues: MRIGHGFDVHAFGGEGPIIIGGVRIPYEKGLLAHSDGDVALHALTDALLGAAALGDIGKLFPDTDPTFKGADSRELLREAWRRIQAKGYALGNVDVTIIAQAPRMLPHIPQMRVFIAEDLGCHMDDVNVKATTTEKLGFTGRGEGIACEAVALLIKATK.

Residues Asp-8 and His-10 each coordinate a divalent metal cation. Residues 8–10 (DVH) and 34–35 (HS) each bind 4-CDP-2-C-methyl-D-erythritol 2-phosphate. His-42 provides a ligand contact to a divalent metal cation. Residues 56–58 (DIG), 61–65 (FPDTD), 100–106 (AQAPRML), 132–135 (TTTE), Phe-139, and Arg-142 each bind 4-CDP-2-C-methyl-D-erythritol 2-phosphate.

The protein belongs to the IspF family. As to quaternary structure, homotrimer. The cofactor is a divalent metal cation.

It carries out the reaction 4-CDP-2-C-methyl-D-erythritol 2-phosphate = 2-C-methyl-D-erythritol 2,4-cyclic diphosphate + CMP. It participates in isoprenoid biosynthesis; isopentenyl diphosphate biosynthesis via DXP pathway; isopentenyl diphosphate from 1-deoxy-D-xylulose 5-phosphate: step 4/6. Its function is as follows. Involved in the biosynthesis of isopentenyl diphosphate (IPP) and dimethylallyl diphosphate (DMAPP), two major building blocks of isoprenoid compounds. Catalyzes the conversion of 4-diphosphocytidyl-2-C-methyl-D-erythritol 2-phosphate (CDP-ME2P) to 2-C-methyl-D-erythritol 2,4-cyclodiphosphate (ME-CPP) with a corresponding release of cytidine 5-monophosphate (CMP). This Escherichia coli O45:K1 (strain S88 / ExPEC) protein is 2-C-methyl-D-erythritol 2,4-cyclodiphosphate synthase.